The chain runs to 99 residues: Co-chaperonin GroES (99 aa).

Belongs to the GroES chaperonin family. In terms of assembly, heptamer of 7 subunits arranged in a ring. Interacts with the chaperonin GroEL.

The protein localises to the cytoplasm. In terms of biological role, together with the chaperonin GroEL, plays an essential role in assisting protein folding. The GroEL-GroES system forms a nano-cage that allows encapsulation of the non-native substrate proteins and provides a physical environment optimized to promote and accelerate protein folding. GroES binds to the apical surface of the GroEL ring, thereby capping the opening of the GroEL channel. In Methylacidiphilum infernorum (isolate V4) (Methylokorus infernorum (strain V4)), this protein is Co-chaperonin GroES.